A 289-amino-acid chain; its full sequence is D-alanine aminotransferase (289 aa).

Y31 contributes to the substrate binding site. Pyridoxal 5'-phosphate is bound at residue R50. Residues R99 and H101 each contribute to the substrate site. N6-(pyridoxal phosphate)lysine is present on K147. E179 provides a ligand contact to pyridoxal 5'-phosphate.

This sequence belongs to the class-IV pyridoxal-phosphate-dependent aminotransferase family. In terms of assembly, homodimer. Pyridoxal 5'-phosphate is required as a cofactor.

The catalysed reaction is D-alanine + 2-oxoglutarate = D-glutamate + pyruvate. In terms of biological role, acts on the D-isomers of alanine, leucine, aspartate, glutamate, aminobutyrate, norvaline and asparagine. The enzyme transfers an amino group from a substrate D-amino acid to the pyridoxal phosphate cofactor to form pyridoxamine and an alpha-keto acid in the first half-reaction. The second half-reaction is the reverse of the first, transferring the amino group from the pyridoxamine to a second alpha-keto acid to form the product D-amino acid via a ping-pong mechanism. This is an important process in the formation of D-alanine and D-glutamate, which are essential bacterial cell wall components. The chain is D-alanine aminotransferase (dat) from Listeria monocytogenes serovar 1/2a (strain ATCC BAA-679 / EGD-e).